Reading from the N-terminus, the 567-residue chain is Ribulokinase (567 aa).

The protein belongs to the ribulokinase family.

It carries out the reaction D-ribulose + ATP = D-ribulose 5-phosphate + ADP + H(+). The enzyme catalyses L-ribulose + ATP = L-ribulose 5-phosphate + ADP + H(+). It participates in carbohydrate degradation; L-arabinose degradation via L-ribulose; D-xylulose 5-phosphate from L-arabinose (bacterial route): step 2/3. This Vibrio parahaemolyticus serotype O3:K6 (strain RIMD 2210633) protein is Ribulokinase.